A 188-amino-acid polypeptide reads, in one-letter code: Elongation factor P (188 aa).

Belongs to the elongation factor P family.

It is found in the cytoplasm. Its pathway is protein biosynthesis; polypeptide chain elongation. Involved in peptide bond synthesis. Stimulates efficient translation and peptide-bond synthesis on native or reconstituted 70S ribosomes in vitro. Probably functions indirectly by altering the affinity of the ribosome for aminoacyl-tRNA, thus increasing their reactivity as acceptors for peptidyl transferase. This Cellvibrio japonicus (strain Ueda107) (Pseudomonas fluorescens subsp. cellulosa) protein is Elongation factor P.